The following is a 373-amino-acid chain: MEGKEGPPCEVRLPTPGAEREGPVHPELGAFGESASDAIKLSETSNDAKKEEIEEELDPRIQEELERLNQASEEINLLELQLDEARTAYRRILTESARRLNGLATQLGACIDKARPYYEARRLAKEAQQDTHSAALRYERAVSMHAAAREMVFVAEQGVTADKNRLDPTWQEMLNHATCKVNEAEEERLRSEFEHQRVTRLCHEAEAKVQTLQKSLKRLIIKSRPYFELKAQLNTILEEHKSRVTLLENSVAQAKLRYSGTLHNLEKISEEIHARRTQSSVLSQRAPPLGAEAPPSVKDGETGPPADTVSLLSLQTIASDLQKSDSVEHLRDLTDVTSLDGRETGAVESGGSRERGEDRGTGGAFRHHRSVSL.

Positions Met-1–Ser-36 are disordered. Coiled coils occupy residues Ala-35 to Arg-98 and Trp-170 to Tyr-258. Disordered regions lie at residues Ala-274 to Thr-308 and Asp-332 to Leu-373. The span at Asp-332 to Gly-360 shows a compositional bias: basic and acidic residues.

Belongs to the SH3BP5 family.

In terms of biological role, functions as a guanine nucleotide exchange factor (GEF) for rab11a. In Xenopus laevis (African clawed frog), this protein is SH3 domain-binding protein 5-like (sh3bp5l).